Here is a 260-residue protein sequence, read N- to C-terminus: Rhythmically expressed gene 2 protein (260 aa).

The chain is Rhythmically expressed gene 2 protein (Reg-2) from Drosophila melanogaster (Fruit fly).